Reading from the N-terminus, the 162-residue chain is Protein cornichon homolog 2 (162 aa).

Residues 1 to 10 are Cytoplasmic-facing; sequence MAFTFAAFCY. Residues 11 to 31 form a helical membrane-spanning segment; it reads MLTLVLCASLIFFIIWHIIAF. Residues 32–72 are Lumenal-facing; it reads DDLRTDFKDPIEQGNPSRARERIKNVERVCCLLRKLVVPEY. Residues 73-93 form a helical membrane-spanning segment; that stretch reads CIHGLFCLMFMCAAEWVTLGL. Topologically, residues 94-138 are cytoplasmic; the sequence is NIPLLFYHLWRYFHRPADGSEVMFDPVSIMNVDILNYCQKEAWCK. Residues 139–161 traverse the membrane as a helical segment; it reads LAFYLLSFFYYLYRVGATVRYVS. A162 is a topological domain (lumenal).

The protein belongs to the cornichon family.

The protein resides in the membrane. Regulates the trafficking and gating properties of AMPA-selective glutamate receptors (AMPARs). In Xenopus laevis (African clawed frog), this protein is Protein cornichon homolog 2 (cnih2).